Consider the following 361-residue polypeptide: Mitochondrial import receptor subunit TOM40 homolog (361 aa).

Over residues 1–10 (MGNVLAASSP) the composition is skewed to low complexity. The interval 1–71 (MGNVLAASSP…AASAGGTADD (71 aa)) is disordered. Pro residues predominate over residues 11–36 (PAGPPPPPAPPLVGLPPPPPSPPGFT). Residues 40–52 (LGGGLGAGAGTGR) show a composition bias toward gly residues. A compositionally biased stretch (low complexity) spans 59–71 (GTAAASAGGTADD).

It belongs to the Tom40 family. In terms of assembly, forms part of the preprotein translocase complex of the outer mitochondrial membrane (TOM complex) which consists of at least 7 different proteins (TOMM5, TOMM6, TOMM7, TOMM20, TOMM22, TOMM40 and TOMM70). Interacts with mitochondrial targeting sequences. Interacts with TIMM29; linking the TIM22 complex to the TOM complex. Forms a complex with BCAP31 (via C-terminus) which mediates the translocation of components of the mitochondrial membrane respiratory chain NADH dehydrogenase (Complex I) from the cytosol to the mitochondria. Interacts (via N-terminus) with CYP1A1 (via mitochondrial targeting signal); this interaction is required for CYP1A1 translocation across the mitochondrial outer membrane.

The protein localises to the mitochondrion outer membrane. Its function is as follows. Channel-forming protein essential for import of protein precursors into mitochondria. Plays a role in the assembly of the mitochondrial membrane respiratory chain NADH dehydrogenase (Complex I) by forming a complex with BCAP31 and mediating the translocation of Complex I components from the cytosol to the mitochondria. This Bos taurus (Bovine) protein is Mitochondrial import receptor subunit TOM40 homolog.